The following is a 137-amino-acid chain: Small ribosomal subunit protein uS12 (137 aa).

Disordered stretches follow at residues 1-22 and 35-57; these read MPTINQLVRKPRKSKVSKSKSP and ATNNAAPQKRGVATRVGTMTPKK. Residues 9 to 18 show a composition bias toward basic residues; the sequence is RKPRKSKVSK. At Asp-102 the chain carries 3-methylthioaspartic acid.

The protein belongs to the universal ribosomal protein uS12 family. In terms of assembly, part of the 30S ribosomal subunit. Contacts proteins S8 and S17. May interact with IF1 in the 30S initiation complex.

Functionally, with S4 and S5 plays an important role in translational accuracy. Interacts with and stabilizes bases of the 16S rRNA that are involved in tRNA selection in the A site and with the mRNA backbone. Located at the interface of the 30S and 50S subunits, it traverses the body of the 30S subunit contacting proteins on the other side and probably holding the rRNA structure together. The combined cluster of proteins S8, S12 and S17 appears to hold together the shoulder and platform of the 30S subunit. The sequence is that of Small ribosomal subunit protein uS12 from Leuconostoc mesenteroides subsp. mesenteroides (strain ATCC 8293 / DSM 20343 / BCRC 11652 / CCM 1803 / JCM 6124 / NCDO 523 / NBRC 100496 / NCIMB 8023 / NCTC 12954 / NRRL B-1118 / 37Y).